Reading from the N-terminus, the 303-residue chain is Hemolysin E (303 aa).

C87 and C285 are joined by a disulfide. The chain crosses the membrane as a helical span at residues 179–199 (AGAAAGIVAGPFGLIISYSIA).

The protein belongs to the hemolysin E family. In terms of assembly, monomer and oligomer. In periplasm, it is present as a monomer, while in outer membrane vesicles, it oligomerizes to form a pore structure that is active. The pore is formed by a dodecamer. In terms of processing, in periplasm, it forms a disulfide bond, which prevents the oligomerization. In outer membrane vesicles, the redox status prevents formation of the disulfide bond, leading to oligomerization and pore formation.

The protein localises to the secreted. Its subcellular location is the periplasm. It is found in the host cell membrane. Functionally, toxin, which has some hemolytic activity towards mammalian cells. Acts by forming a pore-like structure upon contact with mammalian cells. In Salmonella typhi, this protein is Hemolysin E (hlyE).